The chain runs to 115 residues: Large ribosomal subunit protein uL22 (115 aa).

Belongs to the universal ribosomal protein uL22 family. As to quaternary structure, part of the 50S ribosomal subunit.

In terms of biological role, this protein binds specifically to 23S rRNA; its binding is stimulated by other ribosomal proteins, e.g. L4, L17, and L20. It is important during the early stages of 50S assembly. It makes multiple contacts with different domains of the 23S rRNA in the assembled 50S subunit and ribosome. Its function is as follows. The globular domain of the protein is located near the polypeptide exit tunnel on the outside of the subunit, while an extended beta-hairpin is found that lines the wall of the exit tunnel in the center of the 70S ribosome. The protein is Large ribosomal subunit protein uL22 of Endomicrobium trichonymphae.